The following is a 772-amino-acid chain: MDFTNSSCGGSEHRQIEENKPLLGEMSATGGSKMGAVPCRRSLLHFSGMRYKLLQEGDIQVCAIRHPRTFLSKILTSKFLRRWEPHHLTLADNSLTSATPTGYMENSISYSAIEDVQLLSWENAPKYCLQLTIPGGTVLLQAANSYLRDQWFHSLQWKKKIYKYKKVLSNPNRWEVVLKEIRTLVDMALSSPLQDDSIHQAPLEIISKLLSENINLTTQEHESIIVAIAPLLENNHPPPDLCEFFCKHCRERPRSMVVIEVFTPVVQRILKHNMDFGKCPRLRLFTQEYILALNELNAGMEVVKKFIYSMHGPTANCPHPRVLPNVVAVCLAAIYSCYEEFINSRDNSPSLKEIRNGCQQQCDRKPNIPLRLLHTNPDLVSQEVTSTESRHKSVVVTSNEILVEVERNNTVNQKLKANTGNDSEPNLIDCLLICPACSTISIELSPQADRVLACYVEILKMLSDYDDWRPALAILLQPIPFPKEALAHETFTKELKHVIQRFAEDPRQEVHSCLLSVRAGKDGWFQLYSPGGVACDDDGELFASMVHILMGSCYKTKKFLLSLAENKLGPCMLLALRGNQTMVEILCLMLEYNIIENNDTQLQIISTLESTDVGKRMYEQLCDRQRELKELQRKGGPTRLTLPSKSTDADLARLLSSGSFGNLENLSLAFTNVTSACAEQLIKLPSLKQLNLWSTQFGDAGLRVLSEHLTTLQVLNLCETPVSDAGLLALSSMKSLCNLNMNSTKLSADTYEDLKAKLPNLKEVDVRYTEAW.

Residues 52-160 enclose the PH domain; sequence KLLQEGDIQV…WFHSLQWKKK (109 aa). LRR repeat units follow at residues 662–683, 686–706, 711–731, and 735–755; these read NLEN…QLIK, SLKQ…RVLS, TLQV…LALS, and SLCN…EDLK.

It is found in the nucleus. Its subcellular location is the cytoplasm. Its function is as follows. Plays a role in T-cell signaling pathway. This is C-Maf-inducing protein (cmip) from Xenopus laevis (African clawed frog).